Here is a 418-residue protein sequence, read N- to C-terminus: Equilibrative nucleotide transporter 3 (418 aa).

The next 11 helical transmembrane spans lie at 20–40 (MVVC…MLTI), 56–76 (VLTL…AYHE), 86–106 (LIGY…DLAT), 112–132 (IGPY…DATV), 142–162 (LMCP…GALT), 186–206 (MFLA…AYVF), 264–284 (YAVN…GFLY), 291–311 (GLGD…DLVG), 326–346 (KLIT…YFTA), 353–373 (WMIM…VCIM), and 392–412 (LVIF…LWLI).

It belongs to the SLC29A/ENT transporter (TC 2.A.57) family. As to expression, expressed in root tips, vasculature of roots and leaves, and meristems of leaf primordia. Expressed in flowers and siliques.

The protein localises to the cell membrane. Its function is as follows. Nucleoside transporter that functions as a pyrimidine nucleoside carrier in all organs. Has high affinity for adenosine and uridine when expressed in a heterologous system (yeast). Mediates proton-dependent adenosine or uridine transport in Xenopus oocytes. This chain is Equilibrative nucleotide transporter 3, found in Arabidopsis thaliana (Mouse-ear cress).